A 689-amino-acid chain; its full sequence is Pyocin-S2 (689 aa).

His-656, His-681, and His-685 together coordinate Zn(2+).

It belongs to the colicin/pyosin nuclease family. In terms of assembly, purified pyocin S2 makes up a complex of the two (large and small) proteins. The large protein, but not the pyocin complex, shows in vitro DNase activity.

In terms of biological role, causes breakdown of chromosomal DNA as well as complete inhibition of lipid synthesis in sensitive cells. The chain is Pyocin-S2 (pys2) from Pseudomonas aeruginosa (strain ATCC 15692 / DSM 22644 / CIP 104116 / JCM 14847 / LMG 12228 / 1C / PRS 101 / PAO1).